Here is a 180-residue protein sequence, read N- to C-terminus: ATP-dependent protease subunit HslV (180 aa).

Threonine 7 is a catalytic residue. 3 residues coordinate Na(+): glycine 165, cysteine 168, and threonine 171.

This sequence belongs to the peptidase T1B family. HslV subfamily. In terms of assembly, a double ring-shaped homohexamer of HslV is capped on each side by a ring-shaped HslU homohexamer. The assembly of the HslU/HslV complex is dependent on binding of ATP.

The protein localises to the cytoplasm. It catalyses the reaction ATP-dependent cleavage of peptide bonds with broad specificity.. With respect to regulation, allosterically activated by HslU binding. Functionally, protease subunit of a proteasome-like degradation complex believed to be a general protein degrading machinery. The polypeptide is ATP-dependent protease subunit HslV (Bacillus cytotoxicus (strain DSM 22905 / CIP 110041 / 391-98 / NVH 391-98)).